Reading from the N-terminus, the 220-residue chain is Ribosomal RNA large subunit methyltransferase E (220 aa).

The S-adenosyl-L-methionine site is built by Gly60, Trp62, Asp92, Asp108, and Asp133. Lys173 acts as the Proton acceptor in catalysis.

Belongs to the class I-like SAM-binding methyltransferase superfamily. RNA methyltransferase RlmE family.

The protein localises to the cytoplasm. It catalyses the reaction uridine(2552) in 23S rRNA + S-adenosyl-L-methionine = 2'-O-methyluridine(2552) in 23S rRNA + S-adenosyl-L-homocysteine + H(+). Its function is as follows. Specifically methylates the uridine in position 2552 of 23S rRNA at the 2'-O position of the ribose in the fully assembled 50S ribosomal subunit. The protein is Ribosomal RNA large subunit methyltransferase E of Burkholderia multivorans (strain ATCC 17616 / 249).